The primary structure comprises 250 residues: UPF0524 protein C3orf70 (250 aa).

Positions 201-250 are disordered; the sequence is ESCDEDTEEGAELSSEEDYSPESSWEPDECTLLSPSQSDLEVIETIETTV. Over residues 202–229 the composition is skewed to acidic residues; the sequence is SCDEDTEEGAELSSEEDYSPESSWEPDE.

Belongs to the UPF0524 family.

Functionally, may play a role in neuronal and neurobehavioral development. This Homo sapiens (Human) protein is UPF0524 protein C3orf70 (C3orf70).